The primary structure comprises 1385 residues: DNA-directed RNA polymerase subunit beta'' (1385 aa).

Residues Cys-224, Cys-294, Cys-301, and Cys-304 each contribute to the Zn(2+) site.

This sequence belongs to the RNA polymerase beta' chain family. RpoC2 subfamily. In terms of assembly, in plastids the minimal PEP RNA polymerase catalytic core is composed of four subunits: alpha, beta, beta', and beta''. When a (nuclear-encoded) sigma factor is associated with the core the holoenzyme is formed, which can initiate transcription. The cofactor is Zn(2+).

It is found in the plastid. It localises to the chloroplast. The catalysed reaction is RNA(n) + a ribonucleoside 5'-triphosphate = RNA(n+1) + diphosphate. Functionally, DNA-dependent RNA polymerase catalyzes the transcription of DNA into RNA using the four ribonucleoside triphosphates as substrates. This chain is DNA-directed RNA polymerase subunit beta'', found in Illicium oligandrum (Star anise).